A 151-amino-acid chain; its full sequence is UPAR/Ly6 domain-containing protein rtv (151 aa).

The N-terminal stretch at 1–19 is a signal peptide; that stretch reads MQFTSLLLAVIFLISLVSI. At 20-125 the chain is on the extracellular side; sequence DGLLRRCYQC…QGDLCNGARS (106 aa). Intrachain disulfides connect Cys26–Cys65, Cys29–Cys38, Cys60–Cys88, Cys100–Cys113, and Cys115–Cys120. The N-linked (GlcNAc...) asparagine glycan is linked to Asn45. A lipid anchor (GPI-anchor amidated asparagine) is attached at Asn121. Positions 122–151 are cleaved as a propeptide — removed in mature form; it reads GARSWSSAPQMILITMLPLLGSWLLQRMRN. Residues 126–146 form a helical membrane-spanning segment; it reads WSSAPQMILITMLPLLGSWLL. The Cytoplasmic segment spans residues 147-151; sequence QRMRN.

It belongs to the quiver family.

It is found in the cell membrane. Its function is as follows. Required for chitin fiber assembly and organization involved in cuticle formation and tracheal development. The protein is UPAR/Ly6 domain-containing protein rtv of Drosophila melanogaster (Fruit fly).